The following is a 109-amino-acid chain: Large ribosomal subunit protein uL22 (109 aa).

It belongs to the universal ribosomal protein uL22 family. Part of the 50S ribosomal subunit.

Functionally, this protein binds specifically to 23S rRNA; its binding is stimulated by other ribosomal proteins, e.g. L4, L17, and L20. It is important during the early stages of 50S assembly. It makes multiple contacts with different domains of the 23S rRNA in the assembled 50S subunit and ribosome. In terms of biological role, the globular domain of the protein is located near the polypeptide exit tunnel on the outside of the subunit, while an extended beta-hairpin is found that lines the wall of the exit tunnel in the center of the 70S ribosome. This is Large ribosomal subunit protein uL22 from Aromatoleum aromaticum (strain DSM 19018 / LMG 30748 / EbN1) (Azoarcus sp. (strain EbN1)).